The following is a 185-amino-acid chain: Large ribosomal subunit protein bL25 (185 aa).

It belongs to the bacterial ribosomal protein bL25 family. CTC subfamily. As to quaternary structure, part of the 50S ribosomal subunit; part of the 5S rRNA/L5/L18/L25 subcomplex. Contacts the 5S rRNA. Binds to the 5S rRNA independently of L5 and L18.

Functionally, this is one of the proteins that binds to the 5S RNA in the ribosome where it forms part of the central protuberance. The polypeptide is Large ribosomal subunit protein bL25 (Laribacter hongkongensis (strain HLHK9)).